A 299-amino-acid polypeptide reads, in one-letter code: 5,10-dihydrophenazine-1-carboxylate 9-dimethylallyltransferase (299 aa).

Belongs to the aromatic prenyltransferase family.

It carries out the reaction 5,10-dihydrophenazine 1-carboxylate + dimethylallyl diphosphate = 5,10-dihydro-9-dimethylallylphenazine 1-carboxylate + diphosphate. It participates in antibiotic biosynthesis; phenazine biosynthesis. Its activity is regulated as follows. Does not require magnesium or any other divalent metal ions for activity. Involved in the biosynthesis of prenylated phenazines. Catalyzes the transfer of a dimethylallyl moiety to C-9 of 5,10-dihydrophenazine 1-carboxylate (dihydro-PCA). Specific for both dimethylallyl diphosphate and dihydro-PCA. The polypeptide is 5,10-dihydrophenazine-1-carboxylate 9-dimethylallyltransferase (Streptomyces anulatus (Streptomyces chrysomallus)).